Consider the following 325-residue polypeptide: Delta(1)-pyrroline-2-carboxylate reductase (325 aa).

Belongs to the ornithine cyclodeaminase/mu-crystallin family.

It catalyses the reaction L-proline + NAD(+) = 1-pyrroline-2-carboxylate + NADH + H(+). The enzyme catalyses L-proline + NADP(+) = 1-pyrroline-2-carboxylate + NADPH + H(+). Functionally, catalyzes the reduction of Delta(1)-pyrroline-2-carboxylate (Pyr2C) to L-proline, using preferentially NADPH over NADH as the electron donor. May be involved in a degradation pathway that converts trans-3-hydroxy-L-proline (t3LHyp) to L-proline. This Bacillus cereus (strain ZK / E33L) protein is Delta(1)-pyrroline-2-carboxylate reductase.